A 900-amino-acid polypeptide reads, in one-letter code: Xylanolytic transcriptional activator xlnR (900 aa).

The span at 53-71 (SREGGNSENNSTFKPSSVR) shows a compositional bias: polar residues. Positions 53-75 (SREGGNSENNSTFKPSSVRDSLA) are disordered. Positions 98–124 (CDQCNQLRTKCDGQNPCAHCIEFGLTC) form a DNA-binding region, zn(2)-C6 fungal-type. 3 disordered regions span residues 137-169 (SKKD…QEPG), 520-559 (ELPP…NVTE), and 701-722 (EPPE…STVG). Residues 531–542 (DGERENEGDNPS) are compositionally biased toward basic and acidic residues. The segment covering 543–557 (KRNQSLHGGNSNVNV) has biased composition (polar residues). The segment covering 712–722 (SPSGRSSSTVG) has biased composition (low complexity).

This sequence belongs to the xlnR/xlr1 family.

It is found in the nucleus. Its function is as follows. Transcriptional activator of the xylanolytic system. Involved in the regulation of extracellular cellulolytic and xylanolytic genes and in the regulation of the intracellular activities of D-xylose catabolic genes in the pentose catabolic pathway (PCP) in response to the presence of D-xylose. Binds to the DNA sequence 5'-GGNTAAA-3'. The sequence is that of Xylanolytic transcriptional activator xlnR (xlnR) from Emericella nidulans (strain FGSC A4 / ATCC 38163 / CBS 112.46 / NRRL 194 / M139) (Aspergillus nidulans).